Here is a 346-residue protein sequence, read N- to C-terminus: Protein RecA (346 aa).

65 to 72 lines the ATP pocket; the sequence is GPESSGKT.

It belongs to the RecA family.

The protein localises to the cytoplasm. Functionally, can catalyze the hydrolysis of ATP in the presence of single-stranded DNA, the ATP-dependent uptake of single-stranded DNA by duplex DNA, and the ATP-dependent hybridization of homologous single-stranded DNAs. It interacts with LexA causing its activation and leading to its autocatalytic cleavage. This is Protein RecA from Pseudomonas aeruginosa (strain UCBPP-PA14).